A 701-amino-acid polypeptide reads, in one-letter code: Capsid protein VP1 (701 aa).

Belongs to the caliciviridae capsid protein family. Homodimer. Homomultimer. Interacts with the minor capsid protein VP2. May bind to VP3 and Vpg proteins. Post-translationally, cleaved by the viral protease to produce mature capsid protein.

It is found in the virion. The protein localises to the host cytoplasm. In terms of biological role, capsid protein self assembles to form an icosahedral capsid with a T=3 symmetry, about 38 nm in diameter, and consisting of 180 capsid proteins. A smaller form of capsid with a diameter of 23 nm might be capsid proteins assembled as icosahedron with T=1 symmetry. The capsid encapsulates the genomic RNA and is decorated with VP2 proteins. In Vesicular exanthema of swine virus serotype A48 (isolate Swine/United States/A48/1948) (VESV), this protein is Capsid protein VP1.